The following is a 175-amino-acid chain: Calcineurin subunit B (175 aa).

EF-hand domains are found at residues Ala21–Pro56, Ala58–Arg88, Glu90–Thr125, and Gln131–Ile166. 20 residues coordinate Ca(2+): Asp34, Asp36, Ser38, Ser40, Glu45, Asp66, Asp68, Ser70, Asp72, Glu77, Asp103, Asp105, Asp107, Tyr109, Glu114, Asp144, Asp146, Asp148, Lys150, and Glu155.

This sequence belongs to the calcineurin regulatory subunit family. As to quaternary structure, composed of a catalytic subunit (A) and a regulatory subunit (B).

Functionally, regulatory subunit of calcineurin, a calcium-dependent, calmodulin stimulated protein phosphatase. Confers calcium sensitivity. This chain is Calcineurin subunit B (CNB1), found in Kluyveromyces lactis (strain ATCC 8585 / CBS 2359 / DSM 70799 / NBRC 1267 / NRRL Y-1140 / WM37) (Yeast).